The following is a 227-amino-acid chain: 2-C-methyl-D-erythritol 4-phosphate cytidylyltransferase (227 aa).

The protein belongs to the IspD/TarI cytidylyltransferase family. IspD subfamily.

The catalysed reaction is 2-C-methyl-D-erythritol 4-phosphate + CTP + H(+) = 4-CDP-2-C-methyl-D-erythritol + diphosphate. It participates in isoprenoid biosynthesis; isopentenyl diphosphate biosynthesis via DXP pathway; isopentenyl diphosphate from 1-deoxy-D-xylulose 5-phosphate: step 2/6. In terms of biological role, catalyzes the formation of 4-diphosphocytidyl-2-C-methyl-D-erythritol from CTP and 2-C-methyl-D-erythritol 4-phosphate (MEP). The protein is 2-C-methyl-D-erythritol 4-phosphate cytidylyltransferase of Tolumonas auensis (strain DSM 9187 / NBRC 110442 / TA 4).